Consider the following 225-residue polypeptide: uncharacterized protein (225 aa).

The segment at 32 to 82 is disordered; that stretch reads PKDKKKQNDTENKKKQPKDGENDKQKEQAETQPFEWIQQKDADDKKESNTA. 2 stretches are compositionally biased toward basic and acidic residues: residues 37-60 and 69-79; these read KQND…KEQA and QQKDADDKKES.

Belongs to the MG067/MG068/MG395 family.

This is an uncharacterized protein from Mycoplasma pneumoniae (strain ATCC 29342 / M129 / Subtype 1) (Mycoplasmoides pneumoniae).